The primary structure comprises 140 residues: Putative membrane protein ORF7 (140 aa).

A helical transmembrane segment spans residues 44 to 60 (TCAVSFFALFMLIIWVL). The interval 66 to 118 (PEGSTTRGTDAHTQTEGSTTRGTDAHTQTEGSRDQGSMTPEADDLTRPPLGHG) is disordered. Residues 68 to 103 (GSTTRGTDAHTQTEGSTTRGTDAHTQTEGSRDQGSM) are compositionally biased toward polar residues.

The protein localises to the membrane. This chain is Putative membrane protein ORF7 (ORF7), found in Ictalurid herpesvirus 1 (strain Auburn) (IcHV-1).